The primary structure comprises 39 residues: Photosystem II reaction center protein J (39 aa).

The chain crosses the membrane as a helical span at residues 9 to 29 (LWLVATVGGIAAITVLGIFIY).

Belongs to the PsbJ family. PSII is composed of 1 copy each of membrane proteins PsbA, PsbB, PsbC, PsbD, PsbE, PsbF, PsbH, PsbI, PsbJ, PsbK, PsbL, PsbM, PsbT, PsbX, PsbY, PsbZ, Psb30/Ycf12, at least 3 peripheral proteins of the oxygen-evolving complex and a large number of cofactors. It forms dimeric complexes.

The protein localises to the plastid. The protein resides in the chloroplast thylakoid membrane. Its function is as follows. One of the components of the core complex of photosystem II (PSII). PSII is a light-driven water:plastoquinone oxidoreductase that uses light energy to abstract electrons from H(2)O, generating O(2) and a proton gradient subsequently used for ATP formation. It consists of a core antenna complex that captures photons, and an electron transfer chain that converts photonic excitation into a charge separation. This is Photosystem II reaction center protein J from Pyropia yezoensis (Susabi-nori).